We begin with the raw amino-acid sequence, 505 residues long: Glycerol kinase (505 aa).

Residue threonine 12 coordinates ADP. ATP is bound by residues threonine 12, threonine 13, and serine 14. Position 12 (threonine 12) interacts with sn-glycerol 3-phosphate. Arginine 16 contacts ADP. Residues arginine 82, glutamate 83, tyrosine 134, and aspartate 246 each coordinate sn-glycerol 3-phosphate. 5 residues coordinate glycerol: arginine 82, glutamate 83, tyrosine 134, aspartate 246, and glutamine 247. Positions 268 and 312 each coordinate ADP. ATP contacts are provided by threonine 268, glycine 312, glutamine 316, and glycine 413. Residues glycine 413 and asparagine 417 each contribute to the ADP site.

This sequence belongs to the FGGY kinase family.

The catalysed reaction is glycerol + ATP = sn-glycerol 3-phosphate + ADP + H(+). It participates in polyol metabolism; glycerol degradation via glycerol kinase pathway; sn-glycerol 3-phosphate from glycerol: step 1/1. Its activity is regulated as follows. Inhibited by fructose 1,6-bisphosphate (FBP). Key enzyme in the regulation of glycerol uptake and metabolism. Catalyzes the phosphorylation of glycerol to yield sn-glycerol 3-phosphate. This is Glycerol kinase from Beutenbergia cavernae (strain ATCC BAA-8 / DSM 12333 / CCUG 43141 / JCM 11478 / NBRC 16432 / NCIMB 13614 / HKI 0122).